Consider the following 499-residue polypeptide: Lysine--tRNA ligase (499 aa).

The Mg(2+) site is built by E407 and E414.

The protein belongs to the class-II aminoacyl-tRNA synthetase family. As to quaternary structure, homodimer. It depends on Mg(2+) as a cofactor.

The protein localises to the cytoplasm. It carries out the reaction tRNA(Lys) + L-lysine + ATP = L-lysyl-tRNA(Lys) + AMP + diphosphate. In Lactiplantibacillus plantarum (strain ATCC BAA-793 / NCIMB 8826 / WCFS1) (Lactobacillus plantarum), this protein is Lysine--tRNA ligase.